Consider the following 90-residue polypeptide: UPF0213 protein lmo0166 (90 aa).

Positions 5 to 80 (SEHFFYVLKC…KKLSRKNKDA (76 aa)) constitute a GIY-YIG domain.

This sequence belongs to the UPF0213 family.

This chain is UPF0213 protein lmo0166, found in Listeria monocytogenes serovar 1/2a (strain ATCC BAA-679 / EGD-e).